The following is a 118-amino-acid chain: UPF0102 protein Cphy_2398 (118 aa).

The protein belongs to the UPF0102 family.

The sequence is that of UPF0102 protein Cphy_2398 from Lachnoclostridium phytofermentans (strain ATCC 700394 / DSM 18823 / ISDg) (Clostridium phytofermentans).